Consider the following 1890-residue polypeptide: Proteasome-associated protein ECM29 homolog (1890 aa).

18 HEAT repeats span residues 6–29 (NAEI…EKLE), 30–67 (AAVG…RLSS), 130–167 (DKLF…ICAN), 226–263 (FSDL…MLDF), 294–330 (RVRQ…TNTN), 334–354 (KVLA…ELVS), 355–395 (KVSK…SFPQ), 459–496 (GQQH…EYYA), 498–523 (ARYL…LYGT), 524–561 (SKKD…EQRR), 565–602 (PSFQ…SLEV), 685–722 (AKQL…FGLS), 776–813 (PQFV…AVEI), 843–882 (STKL…GDGE), 938–975 (DDFD…HCSQ), 980–1018 (LAKK…ISDS), 1118–1155 (PYLG…DSKE), and 1159–1196 (RYYW…RPNG). Ser-1213 bears the Phosphoserine mark. HEAT repeat units follow at residues 1271–1309 (AVAS…SSGS), 1313–1350 (PHLA…AQEA), 1378–1415 (SVLE…IRLG), 1416–1457 (KEMT…LAKE), 1497–1534 (DYMD…DVSP), 1541–1578 (LNLN…RLSS), 1583–1620 (PDRL…GLDR), and 1623–1660 (QICS…QLEA). A disordered region spans residues 1680-1702 (RKESDDEDEPNTSQELSADERNK). Phosphoserine is present on Ser-1683. A Phosphothreonine modification is found at Thr-1691. At Ser-1692 the chain carries Phosphoserine. 2 HEAT repeats span residues 1751 to 1788 (PVQV…EKKI) and 1826 to 1863 (KEAL…NLEK).

Associated with the proteasome.

The protein resides in the cytoplasm. This Drosophila melanogaster (Fruit fly) protein is Proteasome-associated protein ECM29 homolog.